A 202-amino-acid polypeptide reads, in one-letter code: Small ribosomal subunit protein uS4 (202 aa).

The region spanning 93–156 (RRLDNMVYRL…KDLKIISEAV (64 aa)) is the S4 RNA-binding domain.

Belongs to the universal ribosomal protein uS4 family. Part of the 30S ribosomal subunit. Contacts protein S5. The interaction surface between S4 and S5 is involved in control of translational fidelity.

In terms of biological role, one of the primary rRNA binding proteins, it binds directly to 16S rRNA where it nucleates assembly of the body of the 30S subunit. Functionally, with S5 and S12 plays an important role in translational accuracy. This is Small ribosomal subunit protein uS4 from Pediococcus pentosaceus (strain ATCC 25745 / CCUG 21536 / LMG 10740 / 183-1w).